Here is a 590-residue protein sequence, read N- to C-terminus: MAASSYVDGERDMEKGGMILLQSSENQNPMIDPSPTPSPSATATAPALVLSNSGKRMDQAGKKKYVKQVTGRHNDTELHLAAQRGDLAAVQQILKDINSQMEGILSGEEFDAEVAEIRASIVNEVNELGETALFTAADKGHLDVVKELLKYSSRESIAKKNRSGYDPLHIAAIQGHHAIVEVLLDHDATLSQTFGPSNATPLVSAAMRGHTEVVNQLLSKAGNLLEISRSNNKNALHLAARQGHVEVIKALLSKDPQLARRIDKKGQTALHMAVKGQSSEVVKLLLDADPAIVMQPDKSCNTALHVATRKKRAEIVELLLSLPDTNANTLTRDHKTALDIAEGLPLSEESSYIKECLARSGALRANELNQPRDELRSTVTQIKNDVHIQLEQTKRTNKNVHNISKELRKLHREGINNATNSVTVVAVLFATVAFAAIFTVPGGDNNDGSAVVVGRASFKIFFIFNALALFTSLAVVVVQITLVRGETKAEKRVVEVINKLMWLASMCTSVAFLASSYIVVGRKNEWAAELVTVVGGVIMAGVLGTMTYYVVKSKRTRSMRKKVKSARRSGSNSWHHSDFSNSEVDPIFAI.

A disordered region spans residues 25-44 (ENQNPMIDPSPTPSPSATAT). ANK repeat units follow at residues 73–102 (HNDT…SQME), 128–157 (LGET…RESI), 163–192 (SGYD…TLSQ), 197–226 (SNAT…NLLE), 231–260 (NNKN…QLAR), 265–294 (KGQT…AIVM), and 299–329 (SCNT…NANT). The next 4 helical transmembrane spans lie at 422 to 442 (VTVV…TVPG), 460 to 480 (IFFI…VVQI), 500 to 520 (LMWL…YIVV), and 531 to 551 (VTVV…YYVV).

Interacts with REM19/RTV1. In terms of tissue distribution, expressed in roots, shoots, leaf vasculature and stems.

It is found in the cell membrane. In terms of biological role, involved in salt stress tolerance. May act through abscisic acid (ABA) signaling pathways and promote reactive oxygen species (ROS) production. The chain is Ankyrin repeat-containing protein ITN1 from Arabidopsis thaliana (Mouse-ear cress).